A 175-amino-acid polypeptide reads, in one-letter code: Shikimate kinase (175 aa).

14-19 (GAGKST) contacts ATP. Position 18 (Ser18) interacts with Mg(2+). Substrate-binding residues include Asp36, Arg60, and Gly82. Arg120 contacts ATP. Arg140 lines the substrate pocket. Gln157 is an ATP binding site.

This sequence belongs to the shikimate kinase family. Monomer. Mg(2+) serves as cofactor.

It localises to the cytoplasm. It catalyses the reaction shikimate + ATP = 3-phosphoshikimate + ADP + H(+). Its pathway is metabolic intermediate biosynthesis; chorismate biosynthesis; chorismate from D-erythrose 4-phosphate and phosphoenolpyruvate: step 5/7. Its function is as follows. Catalyzes the specific phosphorylation of the 3-hydroxyl group of shikimic acid using ATP as a cosubstrate. The chain is Shikimate kinase from Mannheimia succiniciproducens (strain KCTC 0769BP / MBEL55E).